A 779-amino-acid chain; its full sequence is Acyl-homoserine lactone acylase PvdQ (779 aa).

An N-terminal signal peptide occupies residues M1 to A25. A propeptide spans A202–G223 (spacer peptide). S224 serves as the catalytic Nucleophile. Over residues E731–A746 the composition is skewed to polar residues. A disordered region spans residues E731–K750.

This sequence belongs to the peptidase S45 family. Heterodimer of an alpha subunit and a beta subunit processed from the same precursor.

It localises to the periplasm. The enzyme catalyses an N-acyl-L-homoserine lactone + H2O = L-homoserine lactone + a carboxylate. Catalyzes the deacylation of acyl-homoserine lactone (AHL or acyl-HSL), releasing homoserine lactone (HSL) and the corresponding fatty acid. Possesses a specificity for the degradation of long-chain acyl-HSLs (side chains of 11 to 14 carbons in length). The chain is Acyl-homoserine lactone acylase PvdQ (pvdQ) from Pseudomonas syringae pv. syringae (strain B728a).